The following is a 313-amino-acid chain: ADP-L-glycero-D-manno-heptose-6-epimerase (313 aa).

NADP(+) contacts are provided by residues 10–11, 31–32, lysine 38, lysine 53, 75–79, and asparagine 92; these read MI, DN, and EGACS. Residue tyrosine 139 is the Proton acceptor of the active site. Lysine 143 is a binding site for NADP(+). Residue asparagine 174 coordinates substrate. Residues valine 175 and lysine 183 each contribute to the NADP(+) site. The Proton acceptor role is filled by lysine 183. Substrate is bound by residues serine 185, histidine 192, 206–209, arginine 214, and tyrosine 277; that span reads FEGS.

This sequence belongs to the NAD(P)-dependent epimerase/dehydratase family. HldD subfamily. Homopentamer. Requires NADP(+) as cofactor.

The enzyme catalyses ADP-D-glycero-beta-D-manno-heptose = ADP-L-glycero-beta-D-manno-heptose. The protein operates within nucleotide-sugar biosynthesis; ADP-L-glycero-beta-D-manno-heptose biosynthesis; ADP-L-glycero-beta-D-manno-heptose from D-glycero-beta-D-manno-heptose 7-phosphate: step 4/4. Catalyzes the interconversion between ADP-D-glycero-beta-D-manno-heptose and ADP-L-glycero-beta-D-manno-heptose via an epimerization at carbon 6 of the heptose. This chain is ADP-L-glycero-D-manno-heptose-6-epimerase, found in Aliivibrio fischeri (strain ATCC 700601 / ES114) (Vibrio fischeri).